Reading from the N-terminus, the 619-residue chain is Dihydroxy-acid dehydratase (619 aa).

Aspartate 81 contacts Mg(2+). A [2Fe-2S] cluster-binding site is contributed by cysteine 122. Positions 123 and 124 each coordinate Mg(2+). Lysine 124 is subject to N6-carboxylysine. Cysteine 195 contributes to the [2Fe-2S] cluster binding site. Residue glutamate 494 coordinates Mg(2+). The active-site Proton acceptor is the serine 520.

Belongs to the IlvD/Edd family. As to quaternary structure, homodimer. [2Fe-2S] cluster serves as cofactor. Requires Mg(2+) as cofactor.

The catalysed reaction is (2R)-2,3-dihydroxy-3-methylbutanoate = 3-methyl-2-oxobutanoate + H2O. It carries out the reaction (2R,3R)-2,3-dihydroxy-3-methylpentanoate = (S)-3-methyl-2-oxopentanoate + H2O. Its pathway is amino-acid biosynthesis; L-isoleucine biosynthesis; L-isoleucine from 2-oxobutanoate: step 3/4. The protein operates within amino-acid biosynthesis; L-valine biosynthesis; L-valine from pyruvate: step 3/4. Functionally, functions in the biosynthesis of branched-chain amino acids. Catalyzes the dehydration of (2R,3R)-2,3-dihydroxy-3-methylpentanoate (2,3-dihydroxy-3-methylvalerate) into 2-oxo-3-methylpentanoate (2-oxo-3-methylvalerate) and of (2R)-2,3-dihydroxy-3-methylbutanoate (2,3-dihydroxyisovalerate) into 2-oxo-3-methylbutanoate (2-oxoisovalerate), the penultimate precursor to L-isoleucine and L-valine, respectively. The sequence is that of Dihydroxy-acid dehydratase from Shewanella denitrificans (strain OS217 / ATCC BAA-1090 / DSM 15013).